The chain runs to 239 residues: Trimethylguanosine synthase (239 aa).

The protein belongs to the methyltransferase superfamily. Trimethylguanosine synthase family. Monomer. Interacts with mug174; both proteins are required to maintain Cajal body integrity.

It is found in the nucleus. Its subcellular location is the cajal body. It carries out the reaction a 5'-end (N(7)-methyl 5'-triphosphoguanosine)-ribonucleoside in snRNA + S-adenosyl-L-methionine = a 5'-end (N(2),N(7)-dimethyl 5'-triphosphoguanosine)-ribonucleoside in snRNA + S-adenosyl-L-homocysteine + H(+). The catalysed reaction is a 5'-end (N(7)-methyl 5'-triphosphoguanosine)-ribonucleoside in snoRNA + S-adenosyl-L-methionine = a 5'-end (N(2),N(7)-dimethyl 5'-triphosphoguanosine)-ribonucleoside in snoRNA + S-adenosyl-L-homocysteine + H(+). It catalyses the reaction a 5'-end (N(2),N(7)-dimethyl 5'-triphosphoguanosine)-ribonucleoside in snRNA + S-adenosyl-L-methionine = a 5'-end (N(2),N(2),N(7)-trimethyl 5'-triphosphoguanosine)-ribonucleoside in snRNA + S-adenosyl-L-homocysteine + H(+). The enzyme catalyses a 5'-end (N(2),N(7)-dimethyl 5'-triphosphoguanosine)-ribonucleoside in snoRNA + S-adenosyl-L-methionine = a 5'-end (N(2),N(2),N(7)-trimethyl 5'-triphosphoguanosine)-ribonucleoside in snoRNA + S-adenosyl-L-homocysteine + H(+). With respect to regulation, substrate inhibited by S-adenosyl-L-homocysteine. Catalyzes the two serial methylation steps for the conversion of the 7-monomethylguanosine (m(7)G) caps of snRNAs and snoRNAs to a 2,2,7-trimethylguanosine (m(2,2,7)G) cap structure. The enzyme is specific for guanine, and N7 methylation must precede N2 methylation. Required for pre-mRNA splicing, pre-rRNA processing and small ribosomal subunit synthesis. Involved in nucleolar structural organization. In Schizosaccharomyces pombe (strain 972 / ATCC 24843) (Fission yeast), this protein is Trimethylguanosine synthase (tgs1).